Consider the following 75-residue polypeptide: MAFLKKSLFLVLFLGLVSLSMCEEEKRENEVEEEQEDDEQSELRRSLRSSIKDMAAAAGRAALNAVNGIVNPGEQ.

An N-terminal signal peptide occupies residues 1 to 22 (MAFLKKSLFLVLFLGLVSLSMC). Positions 23–45 (EEEKRENEVEEEQEDDEQSELRR) are excised as a propeptide. A disordered region spans residues 26-46 (KRENEVEEEQEDDEQSELRRS). Positions 30 to 40 (EVEEEQEDDEQ) are enriched in acidic residues. Pro-72 carries the post-translational modification Proline amide. The propeptide occupies 74 to 75 (EQ).

Belongs to the frog skin active peptide (FSAP) family. Dermaseptin subfamily. Expressed by the skin glands.

The protein localises to the secreted. The protein resides in the target cell membrane. Its function is as follows. Antimicrobial peptide with weak activity against Gram-positive and Gram-negative bacteria and fungi. Has been tested against E.coli (MIC=96.06-256 uM), S.aureus (MIC&gt;192.12 uM), K.pneumoniae (MIC&gt;189.00 uM) and C.albicans (MIC=384.24-1024 uM). Probably acts by disturbing membrane functions with its alpha-helical amphipathic structure. May penetrate bacterial membranes, but stay at the mammalian membrane surface. Does not show hemolytic activity. Does not interact at all with cardiolipin. The protein is Dermaseptin-SP5 of Agalychnis spurrelli (Gliding leaf frog).